The following is a 310-amino-acid chain: tRNA dimethylallyltransferase (310 aa).

14–21 provides a ligand contact to ATP; that stretch reads GPTASGKS. Residue 16-21 participates in substrate binding; sequence TASGKS. 2 interaction with substrate tRNA regions span residues 39–42 and 163–167; these read DSMQ and QRIVR.

This sequence belongs to the IPP transferase family. As to quaternary structure, monomer. Requires Mg(2+) as cofactor.

The catalysed reaction is adenosine(37) in tRNA + dimethylallyl diphosphate = N(6)-dimethylallyladenosine(37) in tRNA + diphosphate. In terms of biological role, catalyzes the transfer of a dimethylallyl group onto the adenine at position 37 in tRNAs that read codons beginning with uridine, leading to the formation of N6-(dimethylallyl)adenosine (i(6)A). In Brucella ovis (strain ATCC 25840 / 63/290 / NCTC 10512), this protein is tRNA dimethylallyltransferase.